The sequence spans 434 residues: Glutamate-1-semialdehyde 2,1-aminomutase (434 aa).

Position 273 is an N6-(pyridoxal phosphate)lysine (lysine 273).

It belongs to the class-III pyridoxal-phosphate-dependent aminotransferase family. HemL subfamily. In terms of assembly, homodimer. The cofactor is pyridoxal 5'-phosphate.

The protein localises to the cytoplasm. The enzyme catalyses (S)-4-amino-5-oxopentanoate = 5-aminolevulinate. It participates in porphyrin-containing compound metabolism; protoporphyrin-IX biosynthesis; 5-aminolevulinate from L-glutamyl-tRNA(Glu): step 2/2. This chain is Glutamate-1-semialdehyde 2,1-aminomutase, found in Polynucleobacter asymbioticus (strain DSM 18221 / CIP 109841 / QLW-P1DMWA-1) (Polynucleobacter necessarius subsp. asymbioticus).